The primary structure comprises 766 residues: Isocitrate lyase 2 (766 aa).

Residue 106 to 108 (GGW) participates in substrate binding. Aspartate 177 is a Mg(2+) binding site. Cysteine 215 acts as the Proton acceptor in catalysis. Substrate is bound by residues 216-217 (GH), arginine 252, 487-491 (NLSPS), and threonine 522.

Belongs to the isocitrate lyase/PEP mutase superfamily. Isocitrate lyase family. Requires Mg(2+) as cofactor.

It catalyses the reaction D-threo-isocitrate = glyoxylate + succinate. Its pathway is carbohydrate metabolism; glyoxylate cycle; (S)-malate from isocitrate: step 1/2. In terms of biological role, involved in the persistence and virulence of Mycobacterium. Catalyzes the reversible formation of succinate and glyoxylate from isocitrate, a key step of the glyoxylate cycle, which operates as an anaplerotic route for replenishing the tricarboxylic acid cycle during growth on fatty acid substrates. This is Isocitrate lyase 2 (aceA) from Mycobacterium bovis (strain ATCC BAA-935 / AF2122/97).